We begin with the raw amino-acid sequence, 727 residues long: Polyribonucleotide nucleotidyltransferase (727 aa).

Residues Asp488 and Asp494 each coordinate Mg(2+). Residues 555–614 form the KH domain; it reads PKLYTMKINPEKIRDVIGKGGATIRALTDETGCQINIEEDGTITIAATEAAKADEAKRRI. One can recognise an S1 motif domain in the interval 624–692; it reads GKVYEGPVTK…DKGRVKLSMK (69 aa). The tract at residues 691–727 is disordered; sequence MKALADRPAGDSGRPAPAERGERRERRDGGASEQQQQ. A compositionally biased stretch (basic and acidic residues) spans 707 to 720; that stretch reads PAERGERRERRDGG.

This sequence belongs to the polyribonucleotide nucleotidyltransferase family. Mg(2+) serves as cofactor.

It is found in the cytoplasm. The enzyme catalyses RNA(n+1) + phosphate = RNA(n) + a ribonucleoside 5'-diphosphate. Its function is as follows. Involved in mRNA degradation. Catalyzes the phosphorolysis of single-stranded polyribonucleotides processively in the 3'- to 5'-direction. This chain is Polyribonucleotide nucleotidyltransferase, found in Acidovorax ebreus (strain TPSY) (Diaphorobacter sp. (strain TPSY)).